We begin with the raw amino-acid sequence, 105 residues long: Small cysteine and glycine repeat-containing protein 4 (105 aa).

The 14 X 2 AA repeats of CG stretch occupies residues 4–87 (CGCGSCGGCG…RRTCGSCGCG (84 aa)).

It belongs to the KRTAP type 28 family.

Functionally, in the hair cortex, hair keratin intermediate filaments are embedded in an interfilamentous matrix, consisting of hair keratin-associated proteins (KRTAP), which are essential for the formation of a rigid and resistant hair shaft through their extensive disulfide bond cross-linking with abundant cysteine residues of hair keratins. The matrix proteins include the high-sulfur and high-glycine-tyrosine keratins. This Homo sapiens (Human) protein is Small cysteine and glycine repeat-containing protein 4.